Consider the following 208-residue polypeptide: Ectodysplasin-A receptor-associated adapter protein (208 aa).

Positions 1 to 18 (MASPDDPLRSDHMAKEPV) are enriched in basic and acidic residues. The disordered stretch occupies residues 1-99 (MASPDDPLRS…KGSCSCPSCS (99 aa)). Over residues 49 to 61 (TVNSNCPPNSDDQ) the composition is skewed to polar residues. The region spanning 116 to 195 (DTIRIKLDPC…KILRRWVDEE (80 aa)) is the Death domain.

As to quaternary structure, binds EDAR. Self-associates and binds TRAF1, TRAF2 and TRAF3.

The protein resides in the cytoplasm. In terms of biological role, adapter protein that interacts with EDAR DEATH domain and couples the receptor to EDA signaling pathway during morphogenesis of ectodermal organs. Mediates the activation of NF-kappa-B. The protein is Ectodysplasin-A receptor-associated adapter protein (Edaradd) of Mus musculus (Mouse).